Here is a 457-residue protein sequence, read N- to C-terminus: Phosphoglucosamine mutase (457 aa).

Residue Ser-109 is the Phosphoserine intermediate of the active site. Mg(2+) contacts are provided by Ser-109, Asp-251, Asp-253, and Asp-255. Ser-109 is modified (phosphoserine).

The protein belongs to the phosphohexose mutase family. Mg(2+) serves as cofactor. In terms of processing, activated by phosphorylation.

The enzyme catalyses alpha-D-glucosamine 1-phosphate = D-glucosamine 6-phosphate. Catalyzes the conversion of glucosamine-6-phosphate to glucosamine-1-phosphate. The sequence is that of Phosphoglucosamine mutase from Bdellovibrio bacteriovorus (strain ATCC 15356 / DSM 50701 / NCIMB 9529 / HD100).